A 372-amino-acid polypeptide reads, in one-letter code: Ribosomal RNA small subunit methyltransferase H (372 aa).

S-adenosyl-L-methionine-binding positions include 78-80 (GGH), aspartate 97, tyrosine 124, aspartate 148, and glutamine 155.

Belongs to the methyltransferase superfamily. RsmH family.

It is found in the cytoplasm. The enzyme catalyses cytidine(1402) in 16S rRNA + S-adenosyl-L-methionine = N(4)-methylcytidine(1402) in 16S rRNA + S-adenosyl-L-homocysteine + H(+). Specifically methylates the N4 position of cytidine in position 1402 (C1402) of 16S rRNA. In Mycobacterium leprae (strain Br4923), this protein is Ribosomal RNA small subunit methyltransferase H.